The primary structure comprises 222 residues: Ribonuclease T (222 aa).

An Exonuclease domain is found at 20–194; it reads VVIDVETAGF…YDTERTAELF (175 aa). D23, E25, H181, and D186 together coordinate Mg(2+). The active-site Proton donor/acceptor is the H181.

Belongs to the RNase T family. As to quaternary structure, homodimer. Requires Mg(2+) as cofactor.

Functionally, trims short 3' overhangs of a variety of RNA species, leaving a one or two nucleotide 3' overhang. Responsible for the end-turnover of tRNA: specifically removes the terminal AMP residue from uncharged tRNA (tRNA-C-C-A). Also appears to be involved in tRNA biosynthesis. This chain is Ribonuclease T, found in Shewanella sp. (strain MR-4).